A 371-amino-acid polypeptide reads, in one-letter code: MSERSYYDILGVSKSANDEEIKSAYRKLAIKYHPDKNKGNKESEEKFKEATEAYEILRDPKKRQAYDQFGKAGVGAGAGGFGQGAYTDFSDIFGDFGDIFGDFFGGGRGGFGGGRRSGSQRGSDLRYNLEVSLEDAALGREYKIEIPRLESCGDCNGSGAAKGSSPTTCPDCGGSGQIRRTQGFFSVATTCPTCRGKGTTISNPCKTCGGQGLQEKRRTINIKIPPGVETGSRLKVSGEGEAGPNGGSHGDLYVVTHIKRHELFERQGNDLILVRKITLAQAILGAEIEVPTIDGKKAKMKIPEGTESGQVFRLKGHGMPYLGAYGKGDQHVVVKIEIPKKITRRQRELIEAFARESGENIPGSKGKIFTK.

The region spanning 5–70 (SYYDILGVSK…KKRQAYDQFG (66 aa)) is the J domain. The CR-type zinc finger occupies 139 to 217 (GREYKIEIPR…CGGQGLQEKR (79 aa)). Cys152, Cys155, Cys169, Cys172, Cys191, Cys194, Cys205, and Cys208 together coordinate Zn(2+). CXXCXGXG motif repeat units follow at residues 152–159 (CGDCNGSG), 169–176 (CPDCGGSG), 191–198 (CPTCRGKG), and 205–212 (CKTCGGQG).

Belongs to the DnaJ family. Homodimer. Zn(2+) serves as cofactor.

The protein resides in the cytoplasm. Participates actively in the response to hyperosmotic and heat shock by preventing the aggregation of stress-denatured proteins and by disaggregating proteins, also in an autonomous, DnaK-independent fashion. Unfolded proteins bind initially to DnaJ; upon interaction with the DnaJ-bound protein, DnaK hydrolyzes its bound ATP, resulting in the formation of a stable complex. GrpE releases ADP from DnaK; ATP binding to DnaK triggers the release of the substrate protein, thus completing the reaction cycle. Several rounds of ATP-dependent interactions between DnaJ, DnaK and GrpE are required for fully efficient folding. Also involved, together with DnaK and GrpE, in the DNA replication of plasmids through activation of initiation proteins. The sequence is that of Chaperone protein DnaJ from Leptospira borgpetersenii serovar Hardjo-bovis (strain JB197).